The primary structure comprises 318 residues: Ribose-phosphate pyrophosphokinase 2 (318 aa).

96–101 (RQDKKD) provides a ligand contact to ATP. Mg(2+) contacts are provided by Asp128, His130, Asp139, and Asp143. His130 is an ATP binding site. A binding of phosphoribosylpyrophosphate region spans residues 212–227 (KDRVAILVDDMADTCG).

The protein belongs to the ribose-phosphate pyrophosphokinase family. In terms of assembly, homodimer. The active form is probably a hexamer composed of 3 homodimers. Requires Mg(2+) as cofactor.

The catalysed reaction is D-ribose 5-phosphate + ATP = 5-phospho-alpha-D-ribose 1-diphosphate + AMP + H(+). Its pathway is metabolic intermediate biosynthesis; 5-phospho-alpha-D-ribose 1-diphosphate biosynthesis; 5-phospho-alpha-D-ribose 1-diphosphate from D-ribose 5-phosphate (route I): step 1/1. With respect to regulation, activated by magnesium and inorganic phosphate. Its function is as follows. Catalyzes the synthesis of phosphoribosylpyrophosphate (PRPP) that is essential for nucleotide synthesis. In Rattus norvegicus (Rat), this protein is Ribose-phosphate pyrophosphokinase 2 (Prps2).